Here is a 419-residue protein sequence, read N- to C-terminus: Adenylosuccinate synthetase (419 aa).

GTP contacts are provided by residues 12 to 18 (GDEGKGK) and 40 to 42 (GHT). Asp13 (proton acceptor) is an active-site residue. 2 residues coordinate Mg(2+): Asp13 and Gly40. IMP contacts are provided by residues 13–16 (DEGK), 38–41 (NAGH), Thr128, Arg142, Gln220, Thr235, and Arg299. His41 acts as the Proton donor in catalysis. Position 295 to 301 (295 to 301 (SITKRPR)) interacts with substrate. GTP is bound by residues Arg301, 327–329 (KSD), and 407–409 (SLG).

Belongs to the adenylosuccinate synthetase family. As to quaternary structure, homodimer. Mg(2+) is required as a cofactor.

The protein resides in the cytoplasm. The catalysed reaction is IMP + L-aspartate + GTP = N(6)-(1,2-dicarboxyethyl)-AMP + GDP + phosphate + 2 H(+). Its pathway is purine metabolism; AMP biosynthesis via de novo pathway; AMP from IMP: step 1/2. Its function is as follows. Plays an important role in the de novo pathway of purine nucleotide biosynthesis. Catalyzes the first committed step in the biosynthesis of AMP from IMP. In Azobacteroides pseudotrichonymphae genomovar. CFP2, this protein is Adenylosuccinate synthetase.